Consider the following 144-residue polypeptide: Small ribosomal subunit protein eS12y (144 aa).

Ser2 carries the N-acetylserine modification.

Belongs to the eukaryotic ribosomal protein eS12 family.

This Arabidopsis thaliana (Mouse-ear cress) protein is Small ribosomal subunit protein eS12y (RPS12C).